The sequence spans 180 residues: MKMLLLLCLGLTLVCVHAEEASSTGRNFNVEKINGEWHTIILASDKREKIEEHGNFRLFLEQIHVLENSLVLKVHTVRDEECSELSMVADKTEKAGEYSVTYDGFNTFTIPKTDYDNFLMAHLINEKDGETFQLMGLYGREPDLSSDIKERFAQLCEEHGILRENIIDLSNANRCLQARE.

An N-terminal signal peptide occupies residues 1-18 (MKMLLLLCLGLTLVCVHA). The cysteines at positions 82 and 175 are disulfide-linked.

Belongs to the calycin superfamily. Lipocalin family. In terms of tissue distribution, because of their involvement in the coordination of social behavior, Mup proteins are thought to exhibit variable expression depending upon gender, age and status of the studied individuals. Expression may also be strain-specific: in strains C57BL/6J and 129S7, transcriptional support is lacking for Mup17.

It localises to the secreted. Its function is as follows. Major urinary proteins (Mups) bind pheromones, thus stabilize them and allow slow release into the air from urine marks. May protect pheromones from oxidation. May also act as pheromones themselves. In this context, they play a role in the regulation of social behaviors, such as aggression, mating, pup-suckling, territory establishment and dominance. The sequence is that of Major urinary protein 17 (Mup17) from Mus musculus (Mouse).